The primary structure comprises 148 residues: Large ribosomal subunit protein bL9 (148 aa).

It belongs to the bacterial ribosomal protein bL9 family.

Functionally, binds to the 23S rRNA. The polypeptide is Large ribosomal subunit protein bL9 (Pseudomonas fluorescens (strain SBW25)).